The primary structure comprises 255 residues: Ribosomal RNA small subunit methyltransferase A (255 aa).

S-adenosyl-L-methionine contacts are provided by Asn12, Leu14, Gly39, Glu60, Asp84, and Asn106.

This sequence belongs to the class I-like SAM-binding methyltransferase superfamily. rRNA adenine N(6)-methyltransferase family. RsmA subfamily.

Its subcellular location is the cytoplasm. The catalysed reaction is adenosine(1518)/adenosine(1519) in 16S rRNA + 4 S-adenosyl-L-methionine = N(6)-dimethyladenosine(1518)/N(6)-dimethyladenosine(1519) in 16S rRNA + 4 S-adenosyl-L-homocysteine + 4 H(+). Its function is as follows. Specifically dimethylates two adjacent adenosines (A1518 and A1519) in the loop of a conserved hairpin near the 3'-end of 16S rRNA in the 30S particle. May play a critical role in biogenesis of 30S subunits. In Janthinobacterium sp. (strain Marseille) (Minibacterium massiliensis), this protein is Ribosomal RNA small subunit methyltransferase A.